Reading from the N-terminus, the 611-residue chain is MAFSQAALSALPLSDRTFRKKPSSSSSSSPNFVLRVRAAAKEVHFNRDGSVTKKLQAGADMVAKLLGVTLGPKGRNVVLQNKYGPPRIVNDGETVLKEIELEDPLENVGVKLVRQAGAKTNDLAGDGSTTSIILAHGLITEGIKVISAGTNPIQVARGIEKTTKALVLELKSMSREIEDHELAHVAAVSAGNDYEVGNMISNAFQQVGRTGVVTIEKGKYLVNNLEIVEGMQFNRGYLSPYFVTDRRKREAEFHDCKLLLVDKKITNPKDMFKILDSAVKEEFPVLIVAEDIEQDALAPVIRNKLKGNLKVAAIKAPAFGERKSHCLDDLAIFTGATVIRDEMGLSLEKAGKEVLGTAKRVLVTKDSTLIVTNGFTQKAVDERVSQIKNLIENTEENFQKKILNERVARLSGGIAIIQVGALTQVELKDKQLKVEDALNATKSAIEEGIVVGGGCALLRLATKVDRIKETLDNTEQKIGAEIFKKALSYPIRLIAKNADTNGNIVIEKVLSNKNTMYGYNAAKNQYEDLMLAGIIDPTKVVRCCLEHASSVAQTFLTSDCVVVEIKEIKPRPIINPPLPTSSPATSSMFPDRKLPRFPQIMPRTRSHFPRK.

The transit peptide at 1–37 (MAFSQAALSALPLSDRTFRKKPSSSSSSSPNFVLRVR) directs the protein to the chloroplast. Positions 377 to 480 (QKAVDERVSQ…LDNTEQKIGA (104 aa)) form a coiled coil. The segment at 574 to 595 (INPPLPTSSPATSSMFPDRKLP) is disordered.

Belongs to the chaperonin (HSP60) family. Part of the Cpn60 complex composed of 7 alpha and 7 beta subunits. Can also form a complex composed of 14 beta subunits only. Both complexes show ATPase activity. The Cpn60 complex interacts with the Cpn10 complex. Interacts with NDHH.

The protein localises to the plastid. It is found in the chloroplast stroma. Functionally, involved specifically in the folding of NDHH, a subunit of the chloroplast NADH dehydrogenase-like complex (NDH). The polypeptide is Chaperonin 60 subunit beta 4, chloroplastic (CPN60B4) (Arabidopsis thaliana (Mouse-ear cress)).